The chain runs to 420 residues: Alpha-ketoglutarate-dependent xanthine dioxygenase xan-1 (420 aa).

Fe cation contacts are provided by His-157 and Asp-159. Residues Thr-206 and Trp-336 each contribute to the 2-oxoglutarate site. A Fe cation-binding site is contributed by His-351. Arg-366 lines the 2-oxoglutarate pocket. Arg-366 is a binding site for substrate.

It belongs to the TfdA dioxygenase family. Requires Fe(2+) as cofactor.

The protein localises to the cytoplasm. It localises to the cytosol. It catalyses the reaction xanthine + 2-oxoglutarate + O2 = urate + succinate + CO2. Functionally, alpha-ketoglutarate-dependent xanthine dioxygenase is a non-heme mononuclear Fe(2+) enzyme that decarboxylates alpha-ketoglutarate to succinate and CO(2) while hydroxylating xanthine to generate uric acid. Allows xanthine utilization as a nitrogen source. The chain is Alpha-ketoglutarate-dependent xanthine dioxygenase xan-1 from Neurospora crassa (strain ATCC 24698 / 74-OR23-1A / CBS 708.71 / DSM 1257 / FGSC 987).